The chain runs to 76 residues: Kappa-actitoxin-Avd4d (76 aa).

Positions 1 to 19 (MNKALFLCLVVLCAAVVFA) are cleaved as a signal peptide. Residues 20 to 31 (AEDLQKAKHVPF) constitute a propeptide that is removed on maturation. Cystine bridges form between C37–C72, C39–C65, and C55–C73.

The protein belongs to the sea anemone type 3 (BDS) potassium channel toxin family. As to expression, moderately expressed in the ectodermal tissue from the distal and proximal tentacles, body wall, and oral disk.

The protein resides in the secreted. It is found in the nematocyst. Its function is as follows. Blocks Kv3 voltage-gated potassium channels. Reduces blood pressure. This chain is Kappa-actitoxin-Avd4d, found in Anemonia viridis (Snakelocks anemone).